We begin with the raw amino-acid sequence, 964 residues long: Protein translocase subunit SecA (964 aa).

ATP contacts are provided by residues Q86, 104–108 (GEGKT), and D494. The disordered stretch occupies residues 848–964 (AESADTIAVA…YKMCHGQNEK (117 aa)). Residues 871–882 (AEGEVEEEDEDT) show a composition bias toward acidic residues. The segment covering 889 to 900 (AESAAASGAGES) has biased composition (low complexity). The Zn(2+) site is built by C947, C949, C958, and H959.

The protein belongs to the SecA family. Monomer and homodimer. Part of the essential Sec protein translocation apparatus which comprises SecA, SecYEG and auxiliary proteins SecDF. Other proteins may also be involved. It depends on Zn(2+) as a cofactor.

It is found in the cell membrane. It localises to the cytoplasm. The enzyme catalyses ATP + H2O + cellular proteinSide 1 = ADP + phosphate + cellular proteinSide 2.. Functionally, part of the Sec protein translocase complex. Interacts with the SecYEG preprotein conducting channel. Has a central role in coupling the hydrolysis of ATP to the transfer of proteins into and across the cell membrane, serving as an ATP-driven molecular motor driving the stepwise translocation of polypeptide chains across the membrane. This chain is Protein translocase subunit SecA, found in Bifidobacterium longum (strain DJO10A).